A 375-amino-acid chain; its full sequence is 23S rRNA (uracil(747)-C(5))-methyltransferase RlmC (375 aa).

4 residues coordinate [4Fe-4S] cluster: Cys3, Cys11, Cys14, and Cys87. Residues Gln212, Phe241, Glu262, and Asn307 each coordinate S-adenosyl-L-methionine. Cys334 acts as the Nucleophile in catalysis.

Belongs to the class I-like SAM-binding methyltransferase superfamily. RNA M5U methyltransferase family. RlmC subfamily.

The catalysed reaction is uridine(747) in 23S rRNA + S-adenosyl-L-methionine = 5-methyluridine(747) in 23S rRNA + S-adenosyl-L-homocysteine + H(+). Catalyzes the formation of 5-methyl-uridine at position 747 (m5U747) in 23S rRNA. The chain is 23S rRNA (uracil(747)-C(5))-methyltransferase RlmC from Yersinia enterocolitica serotype O:8 / biotype 1B (strain NCTC 13174 / 8081).